A 421-amino-acid chain; its full sequence is D-amino acid dehydrogenase (421 aa).

Residue 3-17 (VLILGSGVIGVTSAY) participates in FAD binding.

The protein belongs to the DadA oxidoreductase family. It depends on FAD as a cofactor.

The catalysed reaction is a D-alpha-amino acid + A + H2O = a 2-oxocarboxylate + AH2 + NH4(+). In terms of biological role, oxidative deamination of D-amino acids. In Bradyrhizobium diazoefficiens (strain JCM 10833 / BCRC 13528 / IAM 13628 / NBRC 14792 / USDA 110), this protein is D-amino acid dehydrogenase.